A 235-amino-acid polypeptide reads, in one-letter code: MMKKGLLAGALTATVLFGTCAVDVPGIISPKTAEAASQLTDGIGGRAYLNSNGAILVTKIQLPSSTQVSNGTAYIYSGFSGGTESDIGFQYSDKYNVWKPYMKVGSKGQDQVQYLEGGSQFTNTKGFRPGSTVQLTIYKNLNGNTRATYWGTNNAGYNGRLISEISKTNVGSISKWKALATVATTGSRQSIKSNFSTSFTNITIDNKAITPVIDTQDFAKVTVSGNSVSLSVVKN.

To B.subtilis YncM.

This is an uncharacterized protein from Bacillus subtilis (strain 168).